Here is a 243-residue protein sequence, read N- to C-terminus: UDP-2,3-diacylglucosamine hydrolase (243 aa).

The Mn(2+) site is built by D9, H11, D42, N79, and H114. Residue 79–80 (NR) coordinates substrate. Positions 122, 160, 164, and 195 each coordinate substrate. Mn(2+) is bound by residues H195 and H197.

This sequence belongs to the LpxH family. Requires Mn(2+) as cofactor.

The protein localises to the cell inner membrane. The enzyme catalyses UDP-2-N,3-O-bis[(3R)-3-hydroxytetradecanoyl]-alpha-D-glucosamine + H2O = 2-N,3-O-bis[(3R)-3-hydroxytetradecanoyl]-alpha-D-glucosaminyl 1-phosphate + UMP + 2 H(+). It functions in the pathway glycolipid biosynthesis; lipid IV(A) biosynthesis; lipid IV(A) from (3R)-3-hydroxytetradecanoyl-[acyl-carrier-protein] and UDP-N-acetyl-alpha-D-glucosamine: step 4/6. Its function is as follows. Hydrolyzes the pyrophosphate bond of UDP-2,3-diacylglucosamine to yield 2,3-diacylglucosamine 1-phosphate (lipid X) and UMP by catalyzing the attack of water at the alpha-P atom. Involved in the biosynthesis of lipid A, a phosphorylated glycolipid that anchors the lipopolysaccharide to the outer membrane of the cell. This is UDP-2,3-diacylglucosamine hydrolase from Coxiella burnetii (strain RSA 331 / Henzerling II).